The primary structure comprises 24 residues: Sperm protamine P3 (24 aa).

The tract at residues R1 to R24 is disordered.

In terms of tissue distribution, testis.

It is found in the nucleus. The protein resides in the chromosome. Its function is as follows. Protamines substitute for histones in the chromatin of sperm during the haploid phase of spermatogenesis. They compact sperm DNA into a highly condensed, stable and inactive complex. This chain is Sperm protamine P3, found in Octopus vulgaris (Common octopus).